The primary structure comprises 391 residues: Succinate--CoA ligase [ADP-forming] subunit beta (391 aa).

Residues 9–245 (KQIFAEYGVP…LSEEDPDEVE (237 aa)) enclose the ATP-grasp domain. Residues K46, 53–55 (GRG), E99, A102, and E107 each bind ATP. N200 and D214 together coordinate Mg(2+). Residues N265 and 322–324 (GIV) each bind substrate.

This sequence belongs to the succinate/malate CoA ligase beta subunit family. Heterotetramer of two alpha and two beta subunits. Mg(2+) is required as a cofactor.

It carries out the reaction succinate + ATP + CoA = succinyl-CoA + ADP + phosphate. It catalyses the reaction GTP + succinate + CoA = succinyl-CoA + GDP + phosphate. Its pathway is carbohydrate metabolism; tricarboxylic acid cycle; succinate from succinyl-CoA (ligase route): step 1/1. Succinyl-CoA synthetase functions in the citric acid cycle (TCA), coupling the hydrolysis of succinyl-CoA to the synthesis of either ATP or GTP and thus represents the only step of substrate-level phosphorylation in the TCA. The beta subunit provides nucleotide specificity of the enzyme and binds the substrate succinate, while the binding sites for coenzyme A and phosphate are found in the alpha subunit. In Sulfurovum sp. (strain NBC37-1), this protein is Succinate--CoA ligase [ADP-forming] subunit beta.